We begin with the raw amino-acid sequence, 204 residues long: Outer-membrane lipoprotein LolB (204 aa).

The first 20 residues, 1–20, serve as a signal peptide directing secretion; that stretch reads MLRSRRLALLCLATPLWLAA. Residue cysteine 21 is the site of N-palmitoyl cysteine attachment. Cysteine 21 carries the S-diacylglycerol cysteine lipid modification. The tract at residues 131 to 150 is disordered; that stretch reads GRAAPGTPSNVTRDANGRPD.

It belongs to the LolB family. In terms of assembly, monomer.

The protein resides in the cell outer membrane. Plays a critical role in the incorporation of lipoproteins in the outer membrane after they are released by the LolA protein. This chain is Outer-membrane lipoprotein LolB, found in Cupriavidus metallidurans (strain ATCC 43123 / DSM 2839 / NBRC 102507 / CH34) (Ralstonia metallidurans).